The sequence spans 223 residues: NLP effector protein 3 (223 aa).

The short motif at 90 to 100 is the Conserved undecapeptide motif element; the sequence is AIMYVWYFPKD. Positions 107–113 match the Conserved heptapeptide motif motif; it reads GHRHDWE.

This sequence belongs to the Necrosis inducing protein (NPP1) family.

The protein resides in the secreted. The protein localises to the host cytoplasm. Probable secreted effector that may act as a pathogen-associated molecular pattern (PAMP) recognized by the plant immune system. Seems not to induce necrosis, neither in several susceptible or resistant Vitis species nor in the dicot model plant Nicotiana benthamiana. This is NLP effector protein 3 from Plasmopara viticola (Downy mildew of grapevine).